A 178-amino-acid chain; its full sequence is 5,6,7,8-tetrahydromethanopterin hydro-lyase (178 aa).

The Proton donor role is filled by His33. Residues Asp35, Leu64, Lys82, Thr84, and Gln99 each coordinate substrate.

It belongs to the formaldehyde-activating enzyme family.

The protein resides in the cytoplasm. It catalyses the reaction 5,6,7,8-tetrahydromethanopterin + formaldehyde = 5,10-methylenetetrahydromethanopterin + H2O. In terms of biological role, catalyzes the condensation of formaldehyde with tetrahydromethanopterin (H(4)MPT) to 5,10-methylenetetrahydromethanopterin. In Methanosarcina barkeri (strain Fusaro / DSM 804), this protein is 5,6,7,8-tetrahydromethanopterin hydro-lyase (faeA).